The sequence spans 56 residues: Attractin (56 aa).

Cystine bridges form between Cys-4-Cys-41, Cys-13-Cys-33, and Cys-20-Cys-26.

In terms of tissue distribution, produced by the albumen gland of the egg cordons.

The protein resides in the secreted. Its function is as follows. Water-borne pheromone that attract the marine mollusk Aplysia into breeding aggregations and coordinate male and female reproductive behavior within the aggregation. The chain is Attractin (ATT) from Aplysia vaccaria (California black sea hare).